The chain runs to 512 residues: tRNA modification GTPase gtpbp3, mitochondrial (512 aa).

Residues 246-434 enclose the TrmE-type G domain; sequence GANIAIVGPP…LLNLLKLNLK (189 aa). GTP contacts are provided by residues 253–260, 300–304, and 375–378; these read GPPNAGKS, DTAGL, and NKSD.

Belongs to the TRAFAC class TrmE-Era-EngA-EngB-Septin-like GTPase superfamily. TrmE GTPase family.

It localises to the mitochondrion. Functionally, GTPase involved in the 5-carboxymethylaminomethyl modification (mnm(5)s(2)U34) of the wobble uridine base in mitochondrial tRNAs. The protein is tRNA modification GTPase gtpbp3, mitochondrial (gtpbp3) of Dictyostelium discoideum (Social amoeba).